Consider the following 821-residue polypeptide: Zinc finger protein 41 (821 aa).

The disordered stretch occupies residues Met-1–Asp-55. The span at Glu-24–Ile-35 shows a compositional bias: basic and acidic residues. Residues Val-69–Ser-140 form the KRAB domain. Lys-120 participates in a covalent cross-link: Glycyl lysine isopeptide (Lys-Gly) (interchain with G-Cter in SUMO2). The C2H2-type 1 zinc finger occupies Tyr-313–His-335. A C2H2-type 2; degenerate zinc finger spans residues Arg-341–Thr-364. C2H2-type zinc fingers lie at residues Tyr-369 to His-391, Tyr-397 to His-419, Tyr-425 to His-447, Tyr-453 to His-475, Tyr-481 to His-503, Tyr-509 to His-531, Tyr-537 to His-559, Tyr-565 to His-587, Tyr-593 to His-615, and Tyr-621 to His-643. Lys-647 participates in a covalent cross-link: Glycyl lysine isopeptide (Lys-Gly) (interchain with G-Cter in SUMO2). 6 C2H2-type zinc fingers span residues Tyr-649 to His-671, Tyr-677 to His-699, Asn-705 to His-727, Tyr-733 to His-755, Tyr-761 to His-783, and Tyr-789 to His-811.

This sequence belongs to the krueppel C2H2-type zinc-finger protein family. As to expression, expressed in the heart, brain, placenta, lung, liver, skeletal muscle, kidney and pancreas.

The protein resides in the nucleus. May be involved in transcriptional regulation. The chain is Zinc finger protein 41 (ZNF41) from Homo sapiens (Human).